A 197-amino-acid polypeptide reads, in one-letter code: Rac-like GTP-binding protein RHO1 (197 aa).

13–20 (GDGAVGKT) contacts GTP. An Effector region motif is present at residues 35–43 (YVPTVFDNF). GTP is bound by residues 60-64 (DTAGQ) and 118-121 (TKLD). Cys194 carries the cysteine methyl ester modification. Cys194 is lipidated: S-geranylgeranyl cysteine. Positions 195–197 (SIL) are cleaved as a propeptide — removed in mature form.

It belongs to the small GTPase superfamily. Rho family. As to expression, expressed at the tip of pollen tubes.

The protein resides in the cytoplasm. Its subcellular location is the membrane. In terms of biological role, inactive GDP-bound Rho GTPases reside in the cytosol, are found in a complex with Rho GDP-dissociation inhibitors (Rho GDIs), and are released from the GDI protein in order to translocate to membranes upon activation. May be involved in cell polarity control during the actin-dependent tip growth of pollen tubes. The chain is Rac-like GTP-binding protein RHO1 (RHO1) from Pisum sativum (Garden pea).